Reading from the N-terminus, the 298-residue chain is Glutamyl-Q tRNA(Asp) synthetase (298 aa).

Residues 8-12 and Glu44 contribute to the L-glutamate site; that span reads RFAPS. Positions 11–21 match the 'HIGH' region motif; sequence PSPTGPLHFGS. Residues Cys100, Cys102, Tyr123, and Cys127 each contribute to the Zn(2+) site. Tyr183 and Arg201 together coordinate L-glutamate. Positions 239-243 match the 'KMSKS' region motif; sequence KLSKQ. An ATP-binding site is contributed by Lys242.

This sequence belongs to the class-I aminoacyl-tRNA synthetase family. GluQ subfamily. Zn(2+) serves as cofactor.

Functionally, catalyzes the tRNA-independent activation of glutamate in presence of ATP and the subsequent transfer of glutamate onto a tRNA(Asp). Glutamate is transferred on the 2-amino-5-(4,5-dihydroxy-2-cyclopenten-1-yl) moiety of the queuosine in the wobble position of the QUC anticodon. The chain is Glutamyl-Q tRNA(Asp) synthetase from Burkholderia orbicola (strain MC0-3).